The chain runs to 335 residues: MFVDQITLELRAGKGGNGVVAWRKEKYLPKGGPYGGNGGNGGSVIIEATTSVYSFEAYRNIRFLKAPDGQSGATNNRTGRSGKDLIVSVPTGTLLRDAETGEILHDFTVDGERLLVSQGGKGGKGNTFFKTSVNRAPTKATPGKPGEIRQVELELKLIADIGLVGFPNAGKSTLFNTLAHTEVKVGAYPFTTLAPSLGLVLCKDRLYQKPWIIADIPGIIEGAHQNKGLGLDFLRHIERTLLLLFVIDVSKRERNSPEEDLETLIHELHSHQPDFEKKDMLVALNKIDDLLPDEQEECLQSFQKRFPSYTFVLISGLTGEGVDGLYRFFTQRLAV.

The 158-residue stretch at 1-158 (MFVDQITLEL…RQVELELKLI (158 aa)) folds into the Obg domain. Positions 126-145 (NTFFKTSVNRAPTKATPGKP) are disordered. Residues 159-334 (ADIGLVGFPN…LYRFFTQRLA (176 aa)) form the OBG-type G domain. GTP-binding positions include 165–172 (GFPNAGKS), 190–194 (FTTLA), 215–218 (DIPG), 285–288 (NKID), and 315–317 (SGL). The Mg(2+) site is built by serine 172 and threonine 192.

It belongs to the TRAFAC class OBG-HflX-like GTPase superfamily. OBG GTPase family. In terms of assembly, monomer. Requires Mg(2+) as cofactor.

The protein resides in the cytoplasm. Its function is as follows. An essential GTPase which binds GTP, GDP and possibly (p)ppGpp with moderate affinity, with high nucleotide exchange rates and a fairly low GTP hydrolysis rate. Plays a role in control of the cell cycle, stress response, ribosome biogenesis and in those bacteria that undergo differentiation, in morphogenesis control. The chain is GTPase Obg from Chlamydia pneumoniae (Chlamydophila pneumoniae).